Here is a 393-residue protein sequence, read N- to C-terminus: MDAATLTYDTLRFAEFEDFPETSEPVWILGRKYSVLTEKDEILADVASRLWFTYRKNFPAIGGTGPTSDTGWGCMLRCGQMIFAQALVCRHLGRDWRWTQRKRQPDSYCSVLQAFLDRKDSCYSIHQIAQMGVGEGKSIGQWYGPNTVAQVLKKLAVFDTWSALAVHVAMDNTVVMADIRRLCRSSLPCAGAEAFPADSERHCNGFPAGAEGGGRAAPWRPLVLLIPLRLGLADVNAAYAGTLKHCFRMPQSLGVIGGKPNSAHYFIGYVGEELIYLDPHTTQPAVAAADRCPVPDESFHCQHPPGRMSIAELDPSIAVGFFCETEDDFNDWCQQVSKLSLLGGALPMFELVEQQPSHLACPDVLNLSLDSSDAERLERFFDSEDEDFEILSL.

Methionine 1 bears the N-acetylmethionine mark. Serine 34 carries the phosphoserine modification. Cysteine 74 functions as the Nucleophile in the catalytic mechanism. At cysteine 189 the chain carries S-nitrosocysteine. Catalysis depends on residues aspartate 278 and histidine 280. S-nitrosocysteine is present on residues cysteine 292 and cysteine 301. Cysteine 292 and cysteine 361 form a disulfide bridge. A phosphoserine mark is found at serine 316 and serine 383. The LIR motif lies at 388 to 391; that stretch reads FEIL. At serine 392 the chain carries Phosphoserine.

The protein belongs to the peptidase C54 family. In terms of assembly, interacts with PFKP; promoting phosphorylation of ATG4B at Ser-34. Interacts with GBP7. In terms of processing, phosphorylation at Ser-383 and Ser-392 promotes autophagy by increasing protein delipidation activity without affecting proteolytic activation of ATG8 proteins. Phosphorylation at Ser-316 by ULK1 inhibits autophagy by decreasing both proteolytic activation and delipidation activities. Phosphorylation at Ser-316 is dephosphorylated by protein phosphatase 2A (PP2A). Phosphorylation at Ser-34 by AKT2 promotes its hydrolase activity, leading to increased proteolytic activation and delipidation of ATG8 family proteins. Phosphorylation at Ser-34 by AKT1 promotes mitochondrial localization and inhibition of the F1F0-ATP synthase activity, leading to elevation of mitochondrial reactive oxygen species (ROS). Ubiquitinated by RNF5, leading to its degradation by the proteasome. Post-translationally, S-nitrosylation at Cys-189 and Cys-292 in response to high glucose decreases both proteolytic activation and delipidation activities. In terms of processing, O-glycosylated by OGT, leading to increase protease activity, thereby promoting the proteolytic activation of ATG8 family proteins. Forms reversible intrachain disulfide bonds in response to oxidative stress. Forms interchain disulfide bonds, leading to formation of homooligomers in response to oxidation.

The protein localises to the cytoplasm. It is found in the cytosol. It localises to the cytoplasmic vesicle. The protein resides in the autophagosome. Its subcellular location is the endoplasmic reticulum. The protein localises to the mitochondrion. The enzyme catalyses [protein]-C-terminal L-amino acid-glycyl-phosphatidylethanolamide + H2O = [protein]-C-terminal L-amino acid-glycine + a 1,2-diacyl-sn-glycero-3-phosphoethanolamine. It carries out the reaction [protein]-C-terminal L-amino acid-glycyl-phosphatidylserine + H2O = [protein]-C-terminal L-amino acid-glycine + a 1,2-diacyl-sn-glycero-3-phospho-L-serine. Its activity is regulated as follows. Inhibited by N-ethylmaleimide. Redox-regulated during autophagy since reducing conditions activate ATG4A whereas an oxidizing environment such as the presence of H(2)O(2) inhibits its activity. The cysteine protease activity compounds is inhibited by styrylquinoline compounds 4-28 and LV-320. Cysteine protease that plays a key role in autophagy by mediating both proteolytic activation and delipidation of ATG8 family proteins. Required for canonical autophagy (macroautophagy), non-canonical autophagy as well as for mitophagy. The protease activity is required for proteolytic activation of ATG8 family proteins: cleaves the C-terminal amino acid of ATG8 proteins MAP1LC3A, MAP1LC3B, MAP1LC3C, GABARAPL1, GABARAPL2 and GABARAP, to reveal a C-terminal glycine. Exposure of the glycine at the C-terminus is essential for ATG8 proteins conjugation to phosphatidylethanolamine (PE) and insertion to membranes, which is necessary for autophagy. Protease activity is also required to counteract formation of high-molecular weight conjugates of ATG8 proteins (ATG8ylation): acts as a deubiquitinating-like enzyme that removes ATG8 conjugated to other proteins, such as ATG3. In addition to the protease activity, also mediates delipidation of ATG8 family proteins. Catalyzes delipidation of PE-conjugated forms of ATG8 proteins during macroautophagy. Also involved in non-canonical autophagy, a parallel pathway involving conjugation of ATG8 proteins to single membranes at endolysosomal compartments, by catalyzing delipidation of ATG8 proteins conjugated to phosphatidylserine (PS). Compared to other members of the family (ATG4A, ATG4C or ATG4C), constitutes the major protein for proteolytic activation of ATG8 proteins, while it displays weaker delipidation activity than other ATG4 paralogs. Involved in phagophore growth during mitophagy independently of its protease activity and of ATG8 proteins: acts by regulating ATG9A trafficking to mitochondria and promoting phagophore-endoplasmic reticulum contacts during the lipid transfer phase of mitophagy. Functionally, (Microbial infection) Mediates cleavage of an ATG8 protein homolog coded in the genome of cytopathogenic bovine viral diarrhea virus (BVDV). The sequence is that of Cysteine protease ATG4B (ATG4B) from Bos taurus (Bovine).